The sequence spans 451 residues: Phosphoglucosamine mutase (451 aa).

Serine 101 (phosphoserine intermediate) is an active-site residue. Residues serine 101, aspartate 243, aspartate 245, and aspartate 247 each contribute to the Mg(2+) site. Residue serine 101 is modified to Phosphoserine.

This sequence belongs to the phosphohexose mutase family. It depends on Mg(2+) as a cofactor. Activated by phosphorylation.

It catalyses the reaction alpha-D-glucosamine 1-phosphate = D-glucosamine 6-phosphate. Functionally, catalyzes the conversion of glucosamine-6-phosphate to glucosamine-1-phosphate. This Thermodesulfovibrio yellowstonii (strain ATCC 51303 / DSM 11347 / YP87) protein is Phosphoglucosamine mutase.